Consider the following 694-residue polypeptide: Heat shock protein HSP 90-alpha (694 aa).

A phosphothreonine; by PRKDC mark is found at Thr-5 and Thr-7. The segment at 9–236 (DQPMEEEEVE…DKEVSDDEAK (228 aa)) is interaction with NR3C1. Asn-51 contacts ATP. N6-acetyllysine occurs at positions 58 and 84. Positions 93, 112, and 138 each coordinate ATP. Positions 228–241 (KEVSDDEAKQPDDK) are enriched in basic and acidic residues. A disordered region spans residues 228 to 275 (KEVSDDEAKQPDDKPEIEDVGSDEEEEEKKDGDIDQEELNKTKPIWTR). A phosphoserine mark is found at Ser-231 and Ser-249. The segment covering 242-255 (PEIEDVGSDEEEEE) has biased composition (acidic residues). The segment covering 256 to 268 (KKDGDIDQEELNK) has biased composition (basic and acidic residues). The segment at 258-578 (DGDIDQEELN…TANMERIMKA (321 aa)) is interaction with NR3C1. Residues 261-582 (IDQEELNKTK…ERIMKAQALR (322 aa)) form an interaction with FNIP2 and TSC1 region. The interaction with FLCN and FNIP1 stretch occupies residues 261-694 (IDQEELNKTK…DDTSRMEEVD (434 aa)). Residue Tyr-289 is modified to Phosphotyrosine. An ATP-binding site is contributed by Arg-376. Residue Lys-419 is modified to N6-acetyllysine. At Ser-429 the chain carries Phosphoserine. Lys-434 carries the N6-acetyllysine modification. A Phosphoserine modification is found at Ser-452. At Lys-465 the chain carries N6-acetyllysine. A Phosphotyrosine modification is found at Tyr-468. The residue at position 547 (Lys-547) is an N6-acetyllysine. Cys-560 bears the S-nitrosocysteine mark. The segment at 590–693 (MAAKKHLEVN…DDDTSRMEEV (104 aa)) is interaction with NR1D1. The residue at position 603 (Ser-603) is a Phosphoserine. Positions 644–694 (QTHANRIYRMIKLGLGIDEDDPTADDTAAAVTEEMPPLEGDDDTSRMEEVD) are required for homodimerization. The segment at 662–694 (EDDPTADDTAAAVTEEMPPLEGDDDTSRMEEVD) is disordered. Over residues 668–677 (DDTAAAVTEE) the composition is skewed to low complexity. A TPR repeat-binding motif is present at residues 685–694 (DDTSRMEEVD). The tract at residues 690 to 694 (MEEVD) is essential for interaction with SMYD3, TSC1 and STIP1/HOP. The tract at residues 691–694 (EEVD) is essential for interaction with SGTA and TTC1.

Belongs to the heat shock protein 90 family. Homodimer. Identified in NR3C1/GCR steroid receptor-chaperone complexes formed at least by NR3C1, HSP90AA1 and a variety of proteins containing TPR repeats such as FKBP4, FKBP5, PPID, PPP5C or STIP1. Forms a complex containing HSP90AA1, TSC1 and TSC2; TSC1 is required to recruit TCS2 to the complex. The closed form interacts (via the middle domain and TPR repeat-binding motif) with co-chaperone TSC1 (via C-terminus). Interacts with TOM34. Interacts with TERT; the interaction, together with PTGES3, is required for correct assembly and stabilization of the TERT holoenzyme complex. Interacts with CHORDC1 and DNAJC7. Interacts with STUB1 and UBE2N; may couple the chaperone and ubiquitination systems. Interacts (via TPR repeat-binding motif) with PPP5C (via TPR repeats); the interaction is direct and activates PPP5C phosphatase activity. Following LPS binding, may form a complex with CXCR4, GDF5 and HSPA8. Interacts with KSR1. Interacts with co-chaperone CDC37 (via C-terminus); the interaction inhibits HSP90AA1 ATPase activity. May interact with NWD1. Interacts with FNIP1 and FNIP2; the interaction inhibits HSP90AA1 ATPase activity. Interacts with co-chaperone AHSA1 (phosphorylated on 'Tyr-223'); the interaction activates HSP90AA1 ATPase activity and results in the dissociation of TSC1 from HSP90AA1. Interacts with FLCN in the presence of FNIP1. Interacts with HSP70, STIP1 and PTGES3. Interacts with SMYD3; this interaction enhances SMYD3 histone-lysine N-methyltransferase. Interacts with SGTA (via TPR repeats). Interacts with TTC1 (via TPR repeats). Interacts with HSF1 in an ATP-dependent manner. Interacts with MET; the interaction suppresses MET kinase activity. Interacts with ERBB2 in an ATP-dependent manner; the interaction suppresses ERBB2 kinase activity. Interacts with HIF1A, KEAP1 and RHOBTB2. Interacts with HSF1; this interaction is decreased in a IER5-dependent manner, promoting HSF1 accumulation in the nucleus, homotrimerization and DNA-binding activities. Interacts with STUB1 and SMAD3. Interacts with HSP90AB1; interaction is constitutive. Interacts with HECTD1 (via N-terminus). Interacts with NR3C1 (via domain NR LBD) and NR1D1 (via domain NR LBD). Interacts with NLPR12. Interacts with PDCL3. Interacts with TOMM70; the interaction is required for preprotein mitochondrial import. Interacts with TOMM70, IRF3 and TBK1; the interactions are direct and mediate the association of TOMM70 with IRF3 and TBK1. Forms a complex with ASL, ASS1 and NOS2; the complex regulates cell-autonomous L-arginine synthesis and citrulline recycling while channeling extracellular L-arginine to nitric oxide synthesis pathway. In terms of processing, ISGylated. Post-translationally, S-nitrosylated; negatively regulates the ATPase activity and the activation of eNOS by HSP90AA1. Ubiquitinated via 'Lys-63'-linked polyubiquitination by HECTD1. Ubiquitination promotes translocation into the cytoplasm away from the membrane and secretory pathways.

The protein resides in the nucleus. It is found in the cytoplasm. The protein localises to the melanosome. It localises to the cell membrane. Its subcellular location is the mitochondrion. The catalysed reaction is ATP + H2O = ADP + phosphate + H(+). Its activity is regulated as follows. In the resting state, through the dimerization of its C-terminal domain, HSP90 forms a homodimer which is defined as the open conformation. Upon ATP-binding, the N-terminal domain undergoes significant conformational changes and comes in contact to form an active closed conformation. After HSP90 finishes its chaperoning tasks of assisting the proper folding, stabilization and activation of client proteins under the active state, ATP molecule is hydrolyzed to ADP which then dissociates from HSP90 and directs the protein back to the resting state. Co-chaperone TSC1 promotes ATP binding and inhibits HSP90AA1 ATPase activity. Binding to phosphorylated AHSA1 promotes HSP90AA1 ATPase activity. Inhibited by geldanamycin, Ganetespib (STA-9090) and SNX-2112. Its function is as follows. Molecular chaperone that promotes the maturation, structural maintenance and proper regulation of specific target proteins involved for instance in cell cycle control and signal transduction. Undergoes a functional cycle that is linked to its ATPase activity which is essential for its chaperone activity. This cycle probably induces conformational changes in the client proteins, thereby causing their activation. Interacts dynamically with various co-chaperones that modulate its substrate recognition, ATPase cycle and chaperone function. Engages with a range of client protein classes via its interaction with various co-chaperone proteins or complexes, that act as adapters, simultaneously able to interact with the specific client and the central chaperone itself. Recruitment of ATP and co-chaperone followed by client protein forms a functional chaperone. After the completion of the chaperoning process, properly folded client protein and co-chaperone leave HSP90 in an ADP-bound partially open conformation and finally, ADP is released from HSP90 which acquires an open conformation for the next cycle. Plays a critical role in mitochondrial import, delivers preproteins to the mitochondrial import receptor TOMM70. Apart from its chaperone activity, it also plays a role in the regulation of the transcription machinery. HSP90 and its co-chaperones modulate transcription at least at three different levels. In the first place, they alter the steady-state levels of certain transcription factors in response to various physiological cues. Second, they modulate the activity of certain epigenetic modifiers, such as histone deacetylases or DNA methyl transferases, and thereby respond to the change in the environment. Third, they participate in the eviction of histones from the promoter region of certain genes and thereby turn on gene expression. Binds bacterial lipopolysaccharide (LPS) and mediates LPS-induced inflammatory response, including TNF secretion by monocytes. Antagonizes STUB1-mediated inhibition of TGF-beta signaling via inhibition of STUB1-mediated SMAD3 ubiquitination and degradation. Mediates the association of TOMM70 with IRF3 or TBK1 in mitochondrial outer membrane which promotes host antiviral response. In Oryctolagus cuniculus (Rabbit), this protein is Heat shock protein HSP 90-alpha (HSP90AA1).